We begin with the raw amino-acid sequence, 293 residues long: Signal recognition particle receptor FtsY (293 aa).

GTP is bound by residues 93–100 (GVNGAGKT), 175–179 (DTAGR), and 239–242 (TKLD).

The protein belongs to the GTP-binding SRP family. FtsY subfamily. Part of the signal recognition particle protein translocation system, which is composed of SRP and FtsY. SRP is a ribonucleoprotein composed of Ffh and a 4.5S RNA molecule.

The protein localises to the cell inner membrane. The protein resides in the cytoplasm. The catalysed reaction is GTP + H2O = GDP + phosphate + H(+). Its function is as follows. Involved in targeting and insertion of nascent membrane proteins into the cytoplasmic membrane. Acts as a receptor for the complex formed by the signal recognition particle (SRP) and the ribosome-nascent chain (RNC). Interaction with SRP-RNC leads to the transfer of the RNC complex to the Sec translocase for insertion into the membrane, the hydrolysis of GTP by both Ffh and FtsY, and the dissociation of the SRP-FtsY complex into the individual components. The protein is Signal recognition particle receptor FtsY of Helicobacter pylori (strain J99 / ATCC 700824) (Campylobacter pylori J99).